The sequence spans 1718 residues: PR domain zinc finger protein 2 (1718 aa).

The 114-residue stretch at 28-141 folds into the SET domain; sequence EEVRLFPSAV…PGEELLVWYN (114 aa). The disordered stretch occupies residues 155–335; sequence ERASARSKRS…TSEETLEDCS (181 aa). Residues 159–173 show a composition bias toward basic residues; it reads ARSKRSSPKSRKGKK. Residues 189 to 202 show a composition bias toward polar residues; sequence QLKTSEPDFTSANM. Basic and acidic residues predominate over residues 204–216; the sequence is DSAEGPKEDEEKP. The span at 265–297 shows a compositional bias: acidic residues; it reads DLGEEEEEEEEEDEEEEEDDDDDELEDEGEEEA. Residues 294–316 are retinoblastoma protein binding; it reads EEEASMPNENSVKEPEIRCDEKP. Residues 304–327 are compositionally biased toward basic and acidic residues; it reads SVKEPEIRCDEKPEDLLEEPKTTS. A Glycyl lysine isopeptide (Lys-Gly) (interchain with G-Cter in SUMO2) cross-link involves residue K347. 2 C2H2-type zinc fingers span residues 360–382 and 390–412; these read FPCQ…MHIH and FKCK…ERRH. A disordered region spans residues 405-457; sequence RRRHERRHEAGLKRKPSQTLQPSEDLADGKASGENVASKDDSSPPSLGPDCLI. Phosphoserine is present on S421. The segment at 483-506 adopts a C2H2-type 3 zinc-finger fold; it reads HPCKYCKKVFGTHTNMRRHQRRVH. 2 disordered regions span residues 513 to 550 and 622 to 660; these read KGVR…EGEA and EDLP…DPMV. Residue S643 is modified to Phosphoserine. Glycyl lysine isopeptide (Lys-Gly) (interchain with G-Cter in SUMO2) cross-links involve residues K651, K690, and K692. A disordered region spans residues 729–797; it reads TSSRFKRRTS…GRDERETVSP (69 aa). Positions 738–748 are enriched in low complexity; it reads SSPPSSPQHSP. S743 carries the phosphoserine modification. K774 participates in a covalent cross-link: Glycyl lysine isopeptide (Lys-Gly) (interchain with G-Cter in SUMO2). S781, S785, and S796 each carry phosphoserine. Glycyl lysine isopeptide (Lys-Gly) (interchain with G-Cter in SUMO2) cross-links involve residues K866 and K879. The interval 903–1083 is disordered; sequence VENPADGTRS…SPPPLSAISS (181 aa). Positions 951–969 are enriched in low complexity; that stretch reads LQTPSLSSGQLPPLLIPTD. 2 consecutive short sequence motifs (SH3-binding) follow at residues 970-979 and 985-998; these read PSSPPPCPPV and PPPP…LPAP. Residues 970-997 show a composition bias toward pro residues; that stretch reads PSSPPPCPPVLTVATPPPPLLPTVPLPA. Residues 1018-1027 show a composition bias toward low complexity; it reads SPLPILSPTV. Positions 1028-1038 are enriched in pro residues; the sequence is SPSPSPIPPVE. An SH3-binding motif is present at residues 1028–1052; sequence SPSPSPIPPVEPLMSAASPGPPTLS. The segment covering 1042–1072 has biased composition (low complexity); it reads SAASPGPPTLSSSSSSSSSSSSFSSSSSSSS. C2H2-type zinc fingers lie at residues 1134-1156, 1162-1185, and 1191-1214; these read FVCN…LSIH, FKCE…FLLH, and FVCS…RDLH. Glycyl lysine isopeptide (Lys-Gly) (interchain with G-Cter in SUMO2) cross-links involve residues K1147 and K1151. A disordered region spans residues 1244–1265; the sequence is HMQSLPEDPLETSKEEEELNDS. Residues 1251–1265 show a composition bias toward acidic residues; sequence DPLETSKEEEELNDS. Glycyl lysine isopeptide (Lys-Gly) (interchain with G-Cter in SUMO2) cross-links involve residues K1257 and K1281. Residues 1333–1355 form a C2H2-type 7; atypical zinc finger; sequence IRCTKCGKGVDNMPELHKHILAC. The segment at 1455-1478 adopts a C2H2-type 8; atypical zinc-finger fold; that stretch reads HICPYCNREFTYIGSLNKHAAFSC. Disordered stretches follow at residues 1478–1576, 1589–1612, and 1625–1652; these read CPKK…LRNS, GKKP…RSLH, and KSTL…VTRS. Residues 1486–1498 show a composition bias toward basic residues; sequence PKKKVSHSSKKGG. Positions 1499 to 1511 are enriched in low complexity; sequence HSSPASSDKNSNS. 2 stretches are compositionally biased toward polar residues: residues 1525–1556 and 1599–1608; these read QSMQ…SKQN and HSAQLSSKTS. The span at 1635–1645 shows a compositional bias: basic and acidic residues; the sequence is DRFNIKSRERS.

The protein belongs to the class V-like SAM-binding methyltransferase superfamily. In terms of assembly, binds to the retinoblastoma protein (RB). Interacts with GATA3. In terms of tissue distribution, highly expressed in retinoblastoma cell lines and in brain tumors. Also expressed in a number of other cell lines and in brain, heart, skeletal muscle, liver and spleen. Isoform 1 is expressed in testis at much higher level than isoform 3.

The protein resides in the nucleus. It catalyses the reaction L-lysyl(9)-[histone H3] + 3 S-adenosyl-L-methionine = N(6),N(6),N(6)-trimethyl-L-lysyl(9)-[histone H3] + 3 S-adenosyl-L-homocysteine + 3 H(+). Its function is as follows. S-adenosyl-L-methionine-dependent histone methyltransferase that specifically methylates 'Lys-9' of histone H3. May function as a DNA-binding transcription factor. Binds to the macrophage-specific TPA-responsive element (MTE) of the HMOX1 (heme oxygenase 1) gene and may act as a transcriptional activator of this gene. In Homo sapiens (Human), this protein is PR domain zinc finger protein 2 (PRDM2).